Here is a 407-residue protein sequence, read N- to C-terminus: BRCA1-A complex subunit Abraxas 1 (407 aa).

The MPN domain maps to L7–K155. S48 is modified (phosphoserine). The stretch at L209–A259 forms a coiled coil. Residues K344–F407 form a disordered region. Basic and acidic residues predominate over residues A347–S366. S384, S385, S394, and S404 each carry phosphoserine. Acidic residues predominate over residues I388 to A399. Positions S404–F407 match the pSXXF motif motif.

Belongs to the FAM175 family. Abraxas subfamily. As to quaternary structure, component of the ARISC complex, at least composed of UIMC1/RAP80, ABRAXAS1, BRCC3/BRCC36, BABAM2 and BABAM1/NBA1. Component of the BRCA1-A complex, at least composed of the BRCA1, BARD1, UIMC1/RAP80, ABRAXAS1, BRCC3/BRCC36, BABAM2 and BABAM1/NBA1. In the complex, interacts directly with UIMC1/RAP80, BRCC3/BRCC36 and BABAM2. Homodimer. Interacts directly (when phosphorylated at Ser-404) with BRCA1. The phosphorylated homodimer can interact directly with two BRCA1 chains, giving rise to a heterotetramer. Binds polyubiquitin. In terms of processing, phosphorylation of Ser-404 of the pSXXF motif by ATM or ATR constitutes a specific recognition motif for the BRCT domain of BRCA1.

The protein localises to the nucleus. In terms of biological role, involved in DNA damage response and double-strand break (DSB) repair. Component of the BRCA1-A complex, acting as a central scaffold protein that assembles the various components of the complex and mediates the recruitment of BRCA1. The BRCA1-A complex specifically recognizes 'Lys-63'-linked ubiquitinated histones H2A and H2AX at DNA lesion sites, leading to target the BRCA1-BARD1 heterodimer to sites of DNA damage at DSBs. This complex also possesses deubiquitinase activity that specifically removes 'Lys-63'-linked ubiquitin on histones H2A and H2AX. The chain is BRCA1-A complex subunit Abraxas 1 from Mus musculus (Mouse).